The sequence spans 165 residues: Large ribosomal subunit protein uL10 (165 aa).

The protein belongs to the universal ribosomal protein uL10 family. In terms of assembly, part of the ribosomal stalk of the 50S ribosomal subunit. The N-terminus interacts with L11 and the large rRNA to form the base of the stalk. The C-terminus forms an elongated spine to which L12 dimers bind in a sequential fashion forming a multimeric L10(L12)X complex.

Forms part of the ribosomal stalk, playing a central role in the interaction of the ribosome with GTP-bound translation factors. In Burkholderia ambifaria (strain MC40-6), this protein is Large ribosomal subunit protein uL10.